Consider the following 670-residue polypeptide: Solute carrier organic anion transporter family member 1A5 (670 aa).

Residues 1-20 lie on the Cytoplasmic side of the membrane; that stretch reads MGETEKRIATHGVRCFSKIK. The chain crosses the membrane as a helical span at residues 21 to 40; it reads MFLLALTCAYVSKSLSGIYM. Residues 41–59 are Extracellular-facing; it reads NSMLTQIERQFDIPTSIVG. The chain crosses the membrane as a helical span at residues 60–80; sequence LINGSFEIGNLLLIILVSYFG. Residues 81–86 are Cytoplasmic-facing; it reads TKLHRP. Residues 87–111 form a helical membrane-spanning segment; sequence IMIGIGCVIMGLGCFLMSLPHFLMG. At 112 to 155 the chain is on the extracellular side; the sequence is RYEYETTISPTSNLSSNSFLCMENRTQTLKPTQDPAECVKEMKS. N-linked (GlcNAc...) asparagine glycans are attached at residues asparagine 124 and asparagine 135. Residues 156–184 form a helical membrane-spanning segment; it reads LMWIYVLVGNIIRGIGETPIMPLGISYIE. Topologically, residues 185-203 are cytoplasmic; that stretch reads DFAKSENSPLYIGILESGK. The helical transmembrane segment at 204 to 224 threads the bilayer; the sequence is MIGPIVGLLLGSFCARIYVDT. The Extracellular portion of the chain corresponds to 225-242; sequence GSVNTDDLTITPTDTRWV. The chain crosses the membrane as a helical span at residues 243 to 267; sequence GAWWIGFLVCAGVNILTSIPFFFFP. Over 268 to 311 the chain is Cytoplasmic; that stretch reads KTLPKEGLQDNVARTENDKEEKHREKAKEENRGITKDFLPFMKS. A helical transmembrane segment spans residues 312–333; that stretch reads LSCNPIYMLLILTSVLQINAFI. At 334–353 the chain is on the extracellular side; the sequence is NMFTFLPKYLEQQYGKSTSE. A helical transmembrane segment spans residues 354–377; sequence VVLLIGVCNLPPICIGYLLIGFIM. Topologically, residues 378–381 are cytoplasmic; it reads KKFR. Residues 382–405 traverse the membrane as a helical segment; that stretch reads ITVKKAAYMAFCLSLFEYLLSYFH. The Extracellular segment spans residues 406-513; it reads FMISCDNFQV…PECANKLQYF (108 aa). Positions 433–488 constitute a Kazal-like domain; that stretch reads NKVLADCNTRCSCLTNTWDPVCGDNGLSYMSACLAGCEKSVGMGTHMVFQNCSCIQ. Intrachain disulfides connect cysteine 439-cysteine 469, cysteine 445-cysteine 465, and cysteine 454-cysteine 486. N-linked (GlcNAc...) asparagine glycans are attached at residues asparagine 483 and asparagine 492. The chain crosses the membrane as a helical span at residues 514 to 536; that stretch reads LIMSVIGSFIYSITAIPGYMVLL. At 537–545 the chain is on the cytoplasmic side; sequence RCIKSEEKS. Residues 546–571 form a helical membrane-spanning segment; that stretch reads LGIGLHAFCTRIFAGIPAPIYFGALI. Residues 572–605 lie on the Extracellular side of the membrane; it reads DRTCLHWGTLKCGEPGACRIYNINNFRRIYLVLP. The chain crosses the membrane as a helical span at residues 606–623; it reads AALRGSSYLPAFFILILM. At 624-670 the chain is on the cytoplasmic side; it reads RKFQLPGEMYSSETELADMKQTVKKSECTDVHGIPKVENDGELKTKL.

It belongs to the organo anion transporter (TC 2.A.60) family. As to expression, expressed in brain, choroid plexus and lung, but not in liver or kidney.

The protein resides in the cell membrane. It is found in the basal cell membrane. The enzyme catalyses taurocholate(out) = taurocholate(in). It catalyses the reaction glycocholate(out) = glycocholate(in). It carries out the reaction taurochenodeoxycholate(out) = taurochenodeoxycholate(in). The catalysed reaction is tauroursodeoxycholate(out) = tauroursodeoxycholate(in). The enzyme catalyses 3,3',5'-triiodo-L-thyronine(out) = 3,3',5'-triiodo-L-thyronine(in). It catalyses the reaction L-thyroxine(out) = L-thyroxine(in). It carries out the reaction taurodeoxycholate(out) = taurodeoxycholate(in). The catalysed reaction is glycodeoxycholate(out) = glycodeoxycholate(in). The enzyme catalyses glycochenodeoxycholate(out) = glycochenodeoxycholate(in). It catalyses the reaction glycoursodeoxycholate(out) = glycoursodeoxycholate(in). It carries out the reaction estrone 3-sulfate(out) = estrone 3-sulfate(in). The catalysed reaction is prostaglandin E2(out) = prostaglandin E2(in). The enzyme catalyses substance P(out) = substance P(in). Na(+)-independent transporter that mediates the cellular uptake of a broad range of organic anions such as the endogenous bile salts cholate and deoxycholate, either in their unconjugated or conjugated forms (taurocholate and glycocholate), estrone 3-sulfate and prostaglandin E2, at the plasma membrane. Responsible for intestinal absorption of bile acids. Capable of thyroid hormone transport (both T3 or 3,3',5'-triiodo-L-thyronine, and T4 or L-tyroxine). Plays roles in blood-brain and -cerebrospinal fluid barrier transport of organic anions and signal mediators, and in hormone uptake by neural cells. May also play a role in the reuptake of neuropeptides such as substance P/TAC1 and vasoactive intestinal peptide/VIP released from retinal neurons. Shows a pH-sensitive substrate specificity which may be ascribed to the protonation state of the binding site and leads to a stimulation of substrate transport in an acidic microenvironment. Hydrogencarbonate/HCO3(-) acts as the probable counteranion that exchanges for organic anions. May contribute to regulate the transport of organic compounds in testis across the blood-testis-barrier. This Mus musculus (Mouse) protein is Solute carrier organic anion transporter family member 1A5 (Slco1a5).